The sequence spans 122 residues: Large ribosomal subunit protein uL14 (122 aa).

It belongs to the universal ribosomal protein uL14 family. In terms of assembly, part of the 50S ribosomal subunit. Forms a cluster with proteins L3 and L19. In the 70S ribosome, L14 and L19 interact and together make contacts with the 16S rRNA in bridges B5 and B8.

Functionally, binds to 23S rRNA. Forms part of two intersubunit bridges in the 70S ribosome. This Cutibacterium acnes (strain DSM 16379 / KPA171202) (Propionibacterium acnes) protein is Large ribosomal subunit protein uL14.